The following is a 294-amino-acid chain: 4-diphosphocytidyl-2-C-methyl-D-erythritol kinase (294 aa).

Lys-19 is a catalytic residue. Position 106 to 116 (106 to 116 (PVASGIGGGSA)) interacts with ATP. Asp-148 is an active-site residue.

It belongs to the GHMP kinase family. IspE subfamily.

It carries out the reaction 4-CDP-2-C-methyl-D-erythritol + ATP = 4-CDP-2-C-methyl-D-erythritol 2-phosphate + ADP + H(+). Its pathway is isoprenoid biosynthesis; isopentenyl diphosphate biosynthesis via DXP pathway; isopentenyl diphosphate from 1-deoxy-D-xylulose 5-phosphate: step 3/6. Functionally, catalyzes the phosphorylation of the position 2 hydroxy group of 4-diphosphocytidyl-2C-methyl-D-erythritol. This Rhizobium etli (strain ATCC 51251 / DSM 11541 / JCM 21823 / NBRC 15573 / CFN 42) protein is 4-diphosphocytidyl-2-C-methyl-D-erythritol kinase.